We begin with the raw amino-acid sequence, 317 residues long: Melanocyte-stimulating hormone receptor (317 aa).

At 1–37 the chain is on the extracellular side; the sequence is MSVQGPQRRLLGSLNSTSPAAPRLGLAANQTGPRCLE. N15 and N29 each carry an N-linked (GlcNAc...) asparagine glycan. Residues 38 to 63 form a helical membrane-spanning segment; that stretch reads VSVPDGLFLSLGLVSVVENVLVVAAI. Residues 64–72 lie on the Cytoplasmic side of the membrane; it reads AKNRNLHSP. Residues 73 to 93 traverse the membrane as a helical segment; the sequence is MYYFICCLAVSDLLVSVSSVL. Topologically, residues 94-118 are extracellular; it reads ETAVMLLLEAGTLAGRAAVVQQLDD. Residues 119–140 traverse the membrane as a helical segment; sequence VIDVLVCGAMVSSLCFLGAIAV. Topologically, residues 141-163 are cytoplasmic; it reads DRYISIFYALRYHSIVTLPRAWR. A helical transmembrane segment spans residues 164 to 183; sequence AISAIWVASVLSSTLFIAYY. Topologically, residues 184–191 are extracellular; that stretch reads DHTAVLLC. A helical transmembrane segment spans residues 192–211; the sequence is LVSFFVAMLVLMAVLYVHML. At 212–240 the chain is on the cytoplasmic side; the sequence is ARACQHARGIARLHKRQRPVHQGLGLKGA. The helical transmembrane segment at 241–266 threads the bilayer; sequence ATLTILLGIFFLCWGPFFLHLSLMVL. Residues 267-279 are Extracellular-facing; it reads CPRHPICGCVFKN. The helical transmembrane segment at 280–300 threads the bilayer; the sequence is FNLFLTLIICNSIVDPLIYAF. The Cytoplasmic portion of the chain corresponds to 301–317; sequence RSQELRKTLQEVLLCSW. C315 is lipidated: S-palmitoyl cysteine.

This sequence belongs to the G-protein coupled receptor 1 family. Interacts with MGRN1, but does not undergo MGRN1-mediated ubiquitination; this interaction competes with GNAS-binding and thus inhibits agonist-induced cAMP production. Interacts with OPN3; the interaction results in a decrease in MC1R-mediated cAMP signaling and ultimately a decrease in melanin production in melanocytes.

The protein localises to the cell membrane. Functionally, receptor for MSH (alpha, beta and gamma) and ACTH. The activity of this receptor is mediated by G proteins which activate adenylate cyclase. Mediates melanogenesis, the production of eumelanin (black/brown) and phaeomelanin (red/yellow), via regulation of cAMP signaling in melanocytes. In Panthera onca (Jaguar), this protein is Melanocyte-stimulating hormone receptor (MC1R).